The chain runs to 249 residues: MTRYKAIISYDGYGFAGFQRQPHARSVQEEIEKTLTRINKGRPVVIHGAGRTDSGVHALGQVLHFDLPEDRDEEKLRFALDTQTPEDIDFISVEQVSDDFHSRYNKHSKTYEFLVDIGRPKNPMMRHYATHYPYPLELGLIEEAIAQLEGTHDFTGFTASGTSVEDKVRTITEAKVRFDAERNFLVFTFSGNGFLYKQIRNMVGTLLKIGNKRMPIEQIQRILAEKDRHLAGPTAGPNGLYLKEIRYEE.

The active-site Nucleophile is the Asp-53. A substrate-binding site is contributed by Tyr-111.

Belongs to the tRNA pseudouridine synthase TruA family. Homodimer.

It carries out the reaction uridine(38/39/40) in tRNA = pseudouridine(38/39/40) in tRNA. Formation of pseudouridine at positions 38, 39 and 40 in the anticodon stem and loop of transfer RNAs. This chain is tRNA pseudouridine synthase A, found in Streptococcus sanguinis (strain SK36).